A 182-amino-acid polypeptide reads, in one-letter code: CDP-diacylglycerol--glycerol-3-phosphate 3-phosphatidyltransferase (182 aa).

Over 1-12 (MRLNIPTCLTLF) the chain is Cytoplasmic. A helical membrane pass occupies residues 13–37 (RLIIVPFFIIVFYLPFSNASFYSAI). The Periplasmic portion of the chain corresponds to 38 to 60 (IFILAALTDWFDGFLARKLNQTT). A helical membrane pass occupies residues 61–81 (CFGAFLDPVADKIIVVIGLIL). Over 82 to 86 (IIEYF) the chain is Cytoplasmic. A helical transmembrane segment spans residues 87–107 (HSFWITIPSLIMIIREIIISS). At 108 to 145 (LREWMAEIGKNNLLSVSLISKLKTSIQMLAIFSLLWKE) the chain is on the periplasmic side. A helical membrane pass occupies residues 146-168 (TYIIIIIGILSLYVSSILAFLSM). At 169–181 (LKYFYIAWRDLFR) the chain is on the cytoplasmic side.

This sequence belongs to the CDP-alcohol phosphatidyltransferase class-I family.

It localises to the cell inner membrane. The catalysed reaction is a CDP-1,2-diacyl-sn-glycerol + sn-glycerol 3-phosphate = a 1,2-diacyl-sn-glycero-3-phospho-(1'-sn-glycero-3'-phosphate) + CMP + H(+). Its pathway is phospholipid metabolism; phosphatidylglycerol biosynthesis; phosphatidylglycerol from CDP-diacylglycerol: step 1/2. Catalyzes the conversion of cytidine diphosphate diacylglycerol (CDP-DG) and glycerol 3-phosphate into phosphatidylglycerol. Essential for the synthesis of anionic phospholipids, thereby playing a role in balancing the ratio of zwitterionic and anionic phospholipids, which is thought to be important for normal membrane function. The polypeptide is CDP-diacylglycerol--glycerol-3-phosphate 3-phosphatidyltransferase (Wigglesworthia glossinidia brevipalpis).